The primary structure comprises 135 residues: Large ribosomal subunit protein bL21 (135 aa).

A disordered region spans residues 114–135 (EAEKETPVLDETPAEEVETAAE). Positions 125 to 135 (TPAEEVETAAE) are enriched in acidic residues.

This sequence belongs to the bacterial ribosomal protein bL21 family. Part of the 50S ribosomal subunit. Contacts protein L20.

This protein binds to 23S rRNA in the presence of protein L20. This Nostoc punctiforme (strain ATCC 29133 / PCC 73102) protein is Large ribosomal subunit protein bL21.